Consider the following 733-residue polypeptide: Lanosterol synthase (733 aa).

T2 is subject to N-acetylthreonine. The PFTB 1 repeat unit spans residues 125–166 (REEMVRYLRSVQLPDGGWGLHIEDKSTVFGTALNYVALRILG). The active-site Proton donor is the D456. 3 PFTB repeats span residues 484–529 (LCDA…MIDY), 561–601 (LNQG…ACMG), and 613–654 (VAQA…HSTC).

The protein belongs to the terpene cyclase/mutase family. As to quaternary structure, monomer.

The protein resides in the endoplasmic reticulum membrane. The enzyme catalyses (S)-2,3-epoxysqualene = lanosterol. It participates in terpene metabolism; lanosterol biosynthesis; lanosterol from farnesyl diphosphate: step 3/3. Functionally, key enzyme in the cholesterol biosynthesis pathway. Catalyzes the cyclization of (S)-2,3 oxidosqualene to lanosterol, a reaction that forms the sterol nucleus. Through the production of lanosterol may regulate lens protein aggregation and increase transparency. In Mus musculus (Mouse), this protein is Lanosterol synthase.